Consider the following 157-residue polypeptide: 2-C-methyl-D-erythritol 2,4-cyclodiphosphate synthase (157 aa).

Residues D8, H10, and H42 each contribute to the a divalent metal cation site. 8-10 contributes to the 4-CDP-2-C-methyl-D-erythritol 2-phosphate binding site; that stretch reads DVH. 4-CDP-2-C-methyl-D-erythritol 2-phosphate-binding positions include 56–58, 132–135, F139, and R142; these read DIG and STSE.

It belongs to the IspF family. Homotrimer. A divalent metal cation is required as a cofactor.

It carries out the reaction 4-CDP-2-C-methyl-D-erythritol 2-phosphate = 2-C-methyl-D-erythritol 2,4-cyclic diphosphate + CMP. It functions in the pathway isoprenoid biosynthesis; isopentenyl diphosphate biosynthesis via DXP pathway; isopentenyl diphosphate from 1-deoxy-D-xylulose 5-phosphate: step 4/6. Involved in the biosynthesis of isopentenyl diphosphate (IPP) and dimethylallyl diphosphate (DMAPP), two major building blocks of isoprenoid compounds. Catalyzes the conversion of 4-diphosphocytidyl-2-C-methyl-D-erythritol 2-phosphate (CDP-ME2P) to 2-C-methyl-D-erythritol 2,4-cyclodiphosphate (ME-CPP) with a corresponding release of cytidine 5-monophosphate (CMP). The chain is 2-C-methyl-D-erythritol 2,4-cyclodiphosphate synthase from Dehalococcoides mccartyi (strain CBDB1).